The chain runs to 147 residues: D-aminoacyl-tRNA deacylase (147 aa).

The short motif at 136–137 is the Gly-cisPro motif, important for rejection of L-amino acids element; that stretch reads GP.

It belongs to the DTD family. In terms of assembly, homodimer.

The protein resides in the cytoplasm. The enzyme catalyses glycyl-tRNA(Ala) + H2O = tRNA(Ala) + glycine + H(+). It carries out the reaction a D-aminoacyl-tRNA + H2O = a tRNA + a D-alpha-amino acid + H(+). Its function is as follows. An aminoacyl-tRNA editing enzyme that deacylates mischarged D-aminoacyl-tRNAs. Also deacylates mischarged glycyl-tRNA(Ala), protecting cells against glycine mischarging by AlaRS. Acts via tRNA-based rather than protein-based catalysis; rejects L-amino acids rather than detecting D-amino acids in the active site. By recycling D-aminoacyl-tRNA to D-amino acids and free tRNA molecules, this enzyme counteracts the toxicity associated with the formation of D-aminoacyl-tRNA entities in vivo and helps enforce protein L-homochirality. The sequence is that of D-aminoacyl-tRNA deacylase from Streptococcus equi subsp. zooepidemicus (strain MGCS10565).